The chain runs to 195 residues: Molybdopterin synthase catalytic subunit (195 aa).

A disordered region spans residues M1–G37. A compositionally biased stretch (low complexity) spans P25–G37. Residues H141–R142, K157, and K164–E166 each bind substrate.

Belongs to the MoaE family. MOCS2B subfamily. In terms of assembly, heterotetramer; composed of 2 small (MOCS2A) and 2 large (MOCS2B) subunits.

It localises to the cytoplasm. It catalyses the reaction 2 [molybdopterin-synthase sulfur-carrier protein]-C-terminal-Gly-aminoethanethioate + cyclic pyranopterin phosphate + H2O = molybdopterin + 2 [molybdopterin-synthase sulfur-carrier protein]-C-terminal Gly-Gly + 2 H(+). It functions in the pathway cofactor biosynthesis; molybdopterin biosynthesis. Functionally, catalytic subunit of the molybdopterin synthase complex, a complex that catalyzes the conversion of precursor Z into molybdopterin. Acts by mediating the incorporation of 2 sulfur atoms from thiocarboxylated MOCS2A into precursor Z to generate a dithiolene group. In Emericella nidulans (strain FGSC A4 / ATCC 38163 / CBS 112.46 / NRRL 194 / M139) (Aspergillus nidulans), this protein is Molybdopterin synthase catalytic subunit.